The chain runs to 276 residues: Undecaprenyl-diphosphatase 2 (276 aa).

The next 8 helical transmembrane spans lie at 1 to 21, 44 to 64, 87 to 107, 114 to 134, 150 to 170, 190 to 210, 220 to 240, and 251 to 271; these read MSLW…LFPV, QLLP…LWYF, GHLM…GLLL, VFHD…LLWV, MTFK…IPGF, AAEF…VLEL, LMDA…SVRF, and LASF…WFML.

Belongs to the UppP family.

The protein localises to the cell inner membrane. The catalysed reaction is di-trans,octa-cis-undecaprenyl diphosphate + H2O = di-trans,octa-cis-undecaprenyl phosphate + phosphate + H(+). Functionally, catalyzes the dephosphorylation of undecaprenyl diphosphate (UPP). Confers resistance to bacitracin. The protein is Undecaprenyl-diphosphatase 2 of Burkholderia ambifaria (strain ATCC BAA-244 / DSM 16087 / CCUG 44356 / LMG 19182 / AMMD) (Burkholderia cepacia (strain AMMD)).